A 221-amino-acid chain; its full sequence is GTP cyclohydrolase-2 (221 aa).

GTP is bound at residue 63-67; it reads RLHSE. 3 residues coordinate Zn(2+): C68, C79, and C81. GTP-binding positions include Q84, 107–109, and T129; that span reads EGR. D141 (proton acceptor) is an active-site residue. Catalysis depends on R143, which acts as the Nucleophile. S164 and K169 together coordinate GTP.

It belongs to the GTP cyclohydrolase II family. The cofactor is Zn(2+).

It carries out the reaction GTP + 4 H2O = 2,5-diamino-6-hydroxy-4-(5-phosphoribosylamino)-pyrimidine + formate + 2 phosphate + 3 H(+). Its pathway is cofactor biosynthesis; riboflavin biosynthesis; 5-amino-6-(D-ribitylamino)uracil from GTP: step 1/4. Its function is as follows. Catalyzes the conversion of GTP to 2,5-diamino-6-ribosylamino-4(3H)-pyrimidinone 5'-phosphate (DARP), formate and pyrophosphate. The sequence is that of GTP cyclohydrolase-2 from Streptomyces coelicolor (strain ATCC BAA-471 / A3(2) / M145).